The following is a 180-amino-acid chain: Stathmin-3 (180 aa).

2 S-palmitoyl cysteine lipidation sites follow: cysteine 22 and cysteine 24. Positions 38-180 (GDMEVKQLDK…NKEQREEMSG (143 aa)) constitute an SLD domain. 7 positions are modified to phosphoserine: serine 50, serine 60, serine 65, serine 68, serine 72, serine 73, and serine 81. The interval 58 to 82 (LKSPSDLSPESPMLSSPPKRKDTSL) is disordered. Positions 60-74 (SPSDLSPESPMLSSP) are enriched in low complexity. A coiled-coil region spans residues 76–179 (KRKDTSLEEL…RNKEQREEMS (104 aa)).

The protein belongs to the stathmin family. In terms of assembly, interacts with STAT3. Interacts with CLU (secreted form); this interaction may act as an important modulator during neuronal differentiation. In terms of processing, N-terminal palmitoylation promotes specific anchoring to the cytosolic leaflet of Golgi membranes and subsequent vesicular trafficking along dendrites and axons. Neuronal Stathmins are substrates for palmitoyltransferases ZDHHC3, ZDHHC7 and ZDHHC15.

Its subcellular location is the golgi apparatus. It is found in the cell projection. The protein localises to the growth cone. The protein resides in the axon. It localises to the cytoplasm. Its subcellular location is the cytosol. In terms of biological role, exhibits microtubule-destabilizing activity, which is antagonized by STAT3. This chain is Stathmin-3 (STMN3), found in Bos taurus (Bovine).